The following is a 206-amino-acid chain: MSERSVSKQKQEKRWYTVMAPEIFDRAELGETPADEPEQVYDRTVQTTLGELQNDPSENNTKLTFQISDVGSDTAYTDFVQHELTRDYLRSLTRRGTSKVDAFVTVLTTDDYRVQVQPVAYTTKSADRSQEQAIRSTMVDLVEESAADNTFADLIDSIVEGRLSSAIYNEAKTIYPLRRVEIQKTRLQASPEEVAAEEEASVDVDD.

It belongs to the eukaryotic ribosomal protein eS1 family.

This Natronomonas pharaonis (strain ATCC 35678 / DSM 2160 / CIP 103997 / JCM 8858 / NBRC 14720 / NCIMB 2260 / Gabara) (Halobacterium pharaonis) protein is Small ribosomal subunit protein eS1.